A 34-amino-acid chain; its full sequence is Hemopexin (34 aa).

The tract at residues 1–25 is disordered; the sequence is RPLTQHKPHTPGDEHPHGAEPPGXD.

Belongs to the hemopexin family. Expressed by the liver and secreted in plasma.

It is found in the secreted. In terms of biological role, binds heme and transports it to the liver for breakdown and iron recovery, after which the free hemopexin returns to the circulation. The protein is Hemopexin (HPX) of Gallus gallus (Chicken).